Here is a 112-residue protein sequence, read N- to C-terminus: ATP synthase epsilon chain (112 aa).

The protein belongs to the ATPase epsilon chain family. F-type ATPases have 2 components, CF(1) - the catalytic core - and CF(0) - the membrane proton channel. CF(1) has five subunits: alpha(3), beta(3), gamma(1), delta(1), epsilon(1). CF(0) has three main subunits: a, b and c.

It is found in the cell inner membrane. In terms of biological role, produces ATP from ADP in the presence of a proton gradient across the membrane. This chain is ATP synthase epsilon chain (atpC), found in Rickettsia prowazekii (strain Madrid E).